Here is a 278-residue protein sequence, read N- to C-terminus: Dermonecrotic toxin LbSicTox-betaIA1a (278 aa).

H12 is an active-site residue. 2 residues coordinate Mg(2+): E32 and D34. H48 (nucleophile) is an active-site residue. 2 cysteine pairs are disulfide-bonded: C52-C58 and C54-C197. D92 contributes to the Mg(2+) binding site. N-linked (GlcNAc...) asparagine glycosylation is present at N258.

The protein belongs to the arthropod phospholipase D family. Class II subfamily. Class IIb sub-subfamily. Expressed by the venom gland.

The protein localises to the secreted. The enzyme catalyses an N-(acyl)-sphingosylphosphoethanolamine = an N-(acyl)-sphingosyl-1,3-cyclic phosphate + ethanolamine. It carries out the reaction a 1-acyl-sn-glycero-3-phosphocholine = a 1-acyl-sn-glycero-2,3-cyclic phosphate + choline. The catalysed reaction is a 1-acyl-sn-glycero-3-phosphoethanolamine = a 1-acyl-sn-glycero-2,3-cyclic phosphate + ethanolamine. This toxin does not show activity on sphingomyelin (SM) and does not show dermonecrotic activities. This toxin is a member of dermonecrotic toxins that cleave the phosphodiester linkage between the phosphate and headgroup of certain phospholipids (sphingolipid and lysolipid substrates), forming an alcohol (often choline) and a cyclic phosphate. It may act on ceramide phosphoethanolamine (CPE), lysophosphatidylcholine (LPC) and lysophosphatidylethanolamine (LPE), but not on lysophosphatidylserine (LPS), and lysophosphatidylglycerol (LPG). It may act by transphosphatidylation, releasing exclusively cyclic phosphate products as second products. The protein is Dermonecrotic toxin LbSicTox-betaIA1a of Loxosceles boneti (North American fiddleback spider).